A 247-amino-acid polypeptide reads, in one-letter code: Centromere protein H (247 aa).

The residue at position 1 (Met-1) is an N-acetylmethionine. The span at 1-14 shows a compositional bias: acidic residues; it reads MEEQPQMQDADEPA. The interval 1-34 is disordered; that stretch reads MEEQPQMQDADEPADSGGEGRAGGPPQVAGAQAA. Ser-16 bears the Phosphoserine mark. Positions 24 to 34 are enriched in low complexity; that stretch reads GPPQVAGAQAA. Residues 47–192 adopt a coiled-coil conformation; that stretch reads RAQTKQQLLE…KIDLDSMENS (146 aa). A Glycyl lysine isopeptide (Lys-Gly) (interchain with G-Cter in SUMO2) cross-link involves residue Lys-67. A Phosphothreonine modification is found at Thr-68.

Belongs to the CENP-H/MCM16 family. As to quaternary structure, self-associates. Component of the CENPA-NAC complex, at least composed of CENPA, CENPC, CENPH, CENPM, CENPN, CENPT and CENPU. The CENPA-NAC complex interacts with the CENPA-CAD complex, composed of CENPI, CENPK, CENPL, CENPO, CENPP, CENPQ, CENPR and CENPS. Interacts directly with CENPK. Interacts with KIF2C and NDC80. Interacts with TRIM36.

It is found in the nucleus. It localises to the chromosome. The protein resides in the centromere. Its subcellular location is the kinetochore. Component of the CENPA-NAC (nucleosome-associated) complex, a complex that plays a central role in assembly of kinetochore proteins, mitotic progression and chromosome segregation. The CENPA-NAC complex recruits the CENPA-CAD (nucleosome distal) complex and may be involved in incorporation of newly synthesized CENPA into centromeres. Required for chromosome congression and efficiently align the chromosomes on a metaphase plate. The sequence is that of Centromere protein H from Homo sapiens (Human).